A 119-amino-acid chain; its full sequence is Large ribosomal subunit protein uL18 (119 aa).

This sequence belongs to the universal ribosomal protein uL18 family. In terms of assembly, part of the 50S ribosomal subunit; part of the 5S rRNA/L5/L18/L25 subcomplex. Contacts the 5S and 23S rRNAs.

This is one of the proteins that bind and probably mediate the attachment of the 5S RNA into the large ribosomal subunit, where it forms part of the central protuberance. This is Large ribosomal subunit protein uL18 from Cereibacter sphaeroides (strain ATCC 17029 / ATH 2.4.9) (Rhodobacter sphaeroides).